Reading from the N-terminus, the 433-residue chain is Alpha-(1-&gt;3)-arabinofuranosyltransferase (433 aa).

10 helical membrane passes run 118–138 (LFISINTAAILVAAYLLLRMF), 140–160 (FTLTSVAAPALILAMFATETV), 164–184 (LVFTNINGCILLLEVLFLRWL), 197–217 (LAIGLTLVLKPLLGPLLLLPL), 224–244 (ALVAAVVVPVVVNVAALPLVS), 280–300 (WLILFLRILFTAITFGALWLL), 310–330 (LFWFTTSSGVLLLWSWLVMSL), 333–353 (GYYSMMLFPFLMTVVLPNSVI), 356–376 (WPAWLGVYGFMTLDRWLLFNW), and 385–405 (YLKITYGWSLLLIVTFTVLYF).

It belongs to the glycosyltransferase 87 family.

The protein resides in the cell membrane. The enzyme catalyses Adds an alpha-D-arabinofuranosyl group from trans,octacis-decaprenylphospho-beta-D-arabinofuranose at the 3-O-position of an alpha-(1-&gt;5)-arabinofuranan chain attached to a beta-(1-&gt;5)-galactofuranan chain.. The protein operates within cell wall biogenesis; cell wall polysaccharide biosynthesis. Functionally, involved in the biosynthesis of the arabinogalactan (AG) region of the mycolylarabinogalactan-peptidoglycan (mAGP) complex, an essential component of the mycobacterial cell wall. Catalyzes the addition of an arabinofuranosyl (Araf) residue from the sugar donor beta-D-arabinofuranosyl-1-monophosphoryldecaprenol (DPA) on the C-3 of an alpha-(1-&gt;5)-linked Araf from the arabinan backbone of AG. This chain is Alpha-(1-&gt;3)-arabinofuranosyltransferase (aftC), found in Mycobacterium tuberculosis (strain CDC 1551 / Oshkosh).